The sequence spans 518 residues: DNA-binding protein D-ETS-4 (518 aa).

Disordered stretches follow at residues 74–113 (SQPI…QSSP) and 152–172 (LPPS…SCGE). Polar residues predominate over residues 84–94 (TAPYTNPSSHQ). A compositionally biased stretch (low complexity) spans 102–113 (PHSAYPSPQSSP). Positions 158–171 (ESNCETPSPRSSCG) are enriched in polar residues. The region spanning 258 to 344 (HAKREADAIC…AQLEIWKMAY (87 aa)) is the PNT domain. Residues 393–426 (APLNGSTTSPPATNASNGGTATVKRPNGGRTGGG) are disordered. Polar residues predominate over residues 396-412 (NGSTTSPPATNASNGGT). The ETS DNA-binding region spans 430–513 (IHLWQFLKEL…RSQRLVYQFC (84 aa)).

It belongs to the ETS family. Transient high expression in pole cells during embryonic stages 8-11.

It is found in the nucleus. Functionally, may have a role in germline development. This is DNA-binding protein D-ETS-4 (Ets98B) from Drosophila melanogaster (Fruit fly).